A 402-amino-acid chain; its full sequence is UDP-N-acetylmuramoylalanine--D-glutamate ligase (402 aa).

Residue 97-103 (GTNGKTT) participates in ATP binding.

It belongs to the MurCDEF family.

Its subcellular location is the cytoplasm. The catalysed reaction is UDP-N-acetyl-alpha-D-muramoyl-L-alanine + D-glutamate + ATP = UDP-N-acetyl-alpha-D-muramoyl-L-alanyl-D-glutamate + ADP + phosphate + H(+). Its pathway is cell wall biogenesis; peptidoglycan biosynthesis. Functionally, cell wall formation. Catalyzes the addition of glutamate to the nucleotide precursor UDP-N-acetylmuramoyl-L-alanine (UMA). This is UDP-N-acetylmuramoylalanine--D-glutamate ligase from Campylobacter jejuni subsp. jejuni serotype O:6 (strain 81116 / NCTC 11828).